The primary structure comprises 393 residues: Phosphoglycerate kinase (393 aa).

Substrate contacts are provided by residues 21–23 (DFN), arginine 37, 60–63 (HLGR), arginine 119, and arginine 152. ATP is bound by residues lysine 202, glutamate 323, and 349–352 (GGDT).

Belongs to the phosphoglycerate kinase family. In terms of assembly, monomer.

The protein localises to the cytoplasm. It catalyses the reaction (2R)-3-phosphoglycerate + ATP = (2R)-3-phospho-glyceroyl phosphate + ADP. It functions in the pathway carbohydrate degradation; glycolysis; pyruvate from D-glyceraldehyde 3-phosphate: step 2/5. This is Phosphoglycerate kinase from Desulforudis audaxviator (strain MP104C).